The following is a 208-amino-acid chain: Uracil phosphoribosyltransferase (208 aa).

5-phospho-alpha-D-ribose 1-diphosphate contacts are provided by residues arginine 78, arginine 103, and 130–138; that span reads DPMLATGVS. Uracil-binding positions include isoleucine 193 and 198-200; that span reads GDA. 5-phospho-alpha-D-ribose 1-diphosphate is bound at residue aspartate 199.

It belongs to the UPRTase family. The cofactor is Mg(2+).

The enzyme catalyses UMP + diphosphate = 5-phospho-alpha-D-ribose 1-diphosphate + uracil. It functions in the pathway pyrimidine metabolism; UMP biosynthesis via salvage pathway; UMP from uracil: step 1/1. Allosterically activated by GTP. Its function is as follows. Catalyzes the conversion of uracil and 5-phospho-alpha-D-ribose 1-diphosphate (PRPP) to UMP and diphosphate. The polypeptide is Uracil phosphoribosyltransferase (Thermosipho melanesiensis (strain DSM 12029 / CIP 104789 / BI429)).